The sequence spans 357 residues: Histidinol-phosphate aminotransferase 1 (357 aa).

Position 210 is an N6-(pyridoxal phosphate)lysine (Lys210).

It belongs to the class-II pyridoxal-phosphate-dependent aminotransferase family. Histidinol-phosphate aminotransferase subfamily. In terms of assembly, homodimer. The cofactor is pyridoxal 5'-phosphate.

It carries out the reaction L-histidinol phosphate + 2-oxoglutarate = 3-(imidazol-4-yl)-2-oxopropyl phosphate + L-glutamate. It functions in the pathway amino-acid biosynthesis; L-histidine biosynthesis; L-histidine from 5-phospho-alpha-D-ribose 1-diphosphate: step 7/9. The sequence is that of Histidinol-phosphate aminotransferase 1 from Methylococcus capsulatus (strain ATCC 33009 / NCIMB 11132 / Bath).